The chain runs to 165 residues: Lipoprotein signal peptidase (165 aa).

4 helical membrane passes run Tyr-7 to Leu-27, Ala-46 to Leu-66, Trp-72 to Leu-92, and Leu-100 to Val-120. Catalysis depends on residues Asp-127 and Asp-145. Residues Trp-136–Ile-156 traverse the membrane as a helical segment.

Belongs to the peptidase A8 family.

The protein resides in the cell inner membrane. It carries out the reaction Release of signal peptides from bacterial membrane prolipoproteins. Hydrolyzes -Xaa-Yaa-Zaa-|-(S,diacylglyceryl)Cys-, in which Xaa is hydrophobic (preferably Leu), and Yaa (Ala or Ser) and Zaa (Gly or Ala) have small, neutral side chains.. It functions in the pathway protein modification; lipoprotein biosynthesis (signal peptide cleavage). This protein specifically catalyzes the removal of signal peptides from prolipoproteins. This chain is Lipoprotein signal peptidase, found in Janthinobacterium sp. (strain Marseille) (Minibacterium massiliensis).